Consider the following 124-residue polypeptide: Ribonuclease pancreatic (124 aa).

Basic and acidic residues predominate over residues 1-13 (KESAAAKFERQHM). Positions 1 to 24 (KESAAAKFERQHMDPSTSSASSSN) are disordered. 2 residues coordinate substrate: Lys-7 and Arg-10. The active-site Proton acceptor is His-12. 4 cysteine pairs are disulfide-bonded: Cys-26/Cys-84, Cys-40/Cys-95, Cys-58/Cys-110, and Cys-65/Cys-72. Residues 41–45 (KPVNT), Lys-66, and Arg-85 each bind substrate. The active-site Proton donor is the His-119.

This sequence belongs to the pancreatic ribonuclease family. As to quaternary structure, monomer. Interacts with and forms tight 1:1 complexes with RNH1. Dimerization of two such complexes may occur. Interaction with RNH1 inhibits this protein. In terms of tissue distribution, pancreas.

The protein localises to the secreted. The enzyme catalyses an [RNA] containing cytidine + H2O = an [RNA]-3'-cytidine-3'-phosphate + a 5'-hydroxy-ribonucleotide-3'-[RNA].. The catalysed reaction is an [RNA] containing uridine + H2O = an [RNA]-3'-uridine-3'-phosphate + a 5'-hydroxy-ribonucleotide-3'-[RNA].. Functionally, endonuclease that catalyzes the cleavage of RNA on the 3' side of pyrimidine nucleotides. Acts on single-stranded and double-stranded RNA. The chain is Ribonuclease pancreatic (RNASE1) from Cervus elaphus (Red deer).